Reading from the N-terminus, the 265-residue chain is Pyridoxine 5'-phosphate synthase (265 aa).

Asparagine 6 contributes to the 3-amino-2-oxopropyl phosphate binding site. Aspartate 8 to histidine 9 provides a ligand contact to 1-deoxy-D-xylulose 5-phosphate. Arginine 17 is a 3-amino-2-oxopropyl phosphate binding site. Histidine 42 functions as the Proton acceptor in the catalytic mechanism. Residues arginine 44 and histidine 49 each coordinate 1-deoxy-D-xylulose 5-phosphate. Glutamate 69 serves as the catalytic Proton acceptor. Threonine 99 lines the 1-deoxy-D-xylulose 5-phosphate pocket. Histidine 213 acts as the Proton donor in catalysis. Residues glycine 214 and glycine 235–glutamine 236 each bind 3-amino-2-oxopropyl phosphate.

This sequence belongs to the PNP synthase family. In terms of assembly, homooctamer; tetramer of dimers.

Its subcellular location is the cytoplasm. The enzyme catalyses 3-amino-2-oxopropyl phosphate + 1-deoxy-D-xylulose 5-phosphate = pyridoxine 5'-phosphate + phosphate + 2 H2O + H(+). Its pathway is cofactor biosynthesis; pyridoxine 5'-phosphate biosynthesis; pyridoxine 5'-phosphate from D-erythrose 4-phosphate: step 5/5. Catalyzes the complicated ring closure reaction between the two acyclic compounds 1-deoxy-D-xylulose-5-phosphate (DXP) and 3-amino-2-oxopropyl phosphate (1-amino-acetone-3-phosphate or AAP) to form pyridoxine 5'-phosphate (PNP) and inorganic phosphate. This is Pyridoxine 5'-phosphate synthase from Nitratiruptor sp. (strain SB155-2).